A 538-amino-acid chain; its full sequence is Interleukin-21 receptor (538 aa).

A signal peptide spans 1 to 19 (MPRGWAAPLLLLLLQGGWG). 3 disulfide bridges follow: C20-C109, C25-C35, and C65-C81. Residues 20–232 (CPDLVCYTDY…FQTQSEELKE (213 aa)) are Extracellular-facing. Fibronectin type-III domains follow at residues 21–118 (PDLV…AESI) and 119–228 (KPAP…TQSE). Residues N73, N97, N104, N125, and N135 are each glycosylated (N-linked (GlcNAc...) asparagine). C-linked (Man) tryptophan glycosylation is present at W214. The short motif at 214-218 (WSEWS) is the WSXWS motif element. A helical transmembrane segment spans residues 233-253 (GWNPHLLLLLLLVIVFIPAFW). The Cytoplasmic portion of the chain corresponds to 254–538 (SLKTHPLWRL…PLSSPGPQAS (285 aa)). Positions 266-274 (KIWAVPSPE) match the Box 1 motif motif. Disordered regions lie at residues 342-367 (ESDG…SEER) and 457-487 (EDWA…GLDM).

The protein belongs to the type I cytokine receptor family. Type 4 subfamily. As to quaternary structure, heterodimer with the common gamma subunit. Associates with JAK1. In terms of processing, C-mannosylated at Trp-214 in the WSXWS motif, the sugar chain makes extensive hydrogen bonds with Asn-73 sugar, and bridges the two fibronectin domains transforming the V-shaped receptor into an A-frame. As to expression, selectively expressed in lymphoid tissues. Most highly expressed in thymus and spleen.

It is found in the membrane. In terms of biological role, this is a receptor for interleukin-21. The sequence is that of Interleukin-21 receptor (IL21R) from Homo sapiens (Human).